A 295-amino-acid chain; its full sequence is Protease HtpX (295 aa).

2 helical membrane-spanning segments follow: residues 4-24 (IFLFLATNLAIIVVLSIVLRL) and 42-62 (ALLIFAAVFGFGGSFISLAIS). H147 is a binding site for Zn(2+). E148 is an active-site residue. A Zn(2+)-binding site is contributed by H151. The next 2 membrane-spanning stretches (helical) occupy residues 155 to 175 (GDMVTLALIQGVVNTFVIFLA) and 197 to 217 (FWITTIVAEIVFAILASIIVM). E224 serves as a coordination point for Zn(2+).

This sequence belongs to the peptidase M48B family. Zn(2+) serves as cofactor.

The protein localises to the cell inner membrane. The chain is Protease HtpX from Thioalkalivibrio sulfidiphilus (strain HL-EbGR7).